The following is a 120-amino-acid chain: Large ribosomal subunit protein uL22 (120 aa).

This sequence belongs to the universal ribosomal protein uL22 family. As to quaternary structure, part of the 50S ribosomal subunit.

Its function is as follows. This protein binds specifically to 23S rRNA; its binding is stimulated by other ribosomal proteins, e.g. L4, L17, and L20. It is important during the early stages of 50S assembly. It makes multiple contacts with different domains of the 23S rRNA in the assembled 50S subunit and ribosome. In terms of biological role, the globular domain of the protein is located near the polypeptide exit tunnel on the outside of the subunit, while an extended beta-hairpin is found that lines the wall of the exit tunnel in the center of the 70S ribosome. This Corynebacterium kroppenstedtii (strain DSM 44385 / JCM 11950 / CIP 105744 / CCUG 35717) protein is Large ribosomal subunit protein uL22.